A 276-amino-acid polypeptide reads, in one-letter code: Replication protein A 32 kDa subunit-A (276 aa).

The span at Gly-19–Gly-31 shows a compositional bias: gly residues. The disordered stretch occupies residues Gly-19 to Gln-47. Positions Val-77–Pro-151 form a DNA-binding region, OB.

This sequence belongs to the replication factor A protein 2 family. As to quaternary structure, component of the replication protein A complex (RPA/RP-A), a heterotrimeric complex composed of RPA1, RPA2 and RPA3. Post-translationally, differentially phosphorylated throughout the cell cycle, becoming phosphorylated at the G1-S transition and dephosphorylated in late mitosis. Phosphorylation increases upon replication fork stalling.

Its subcellular location is the nucleus. It localises to the PML body. As part of the heterotrimeric replication protein A complex (RPA/RP-A), binds and stabilizes single-stranded DNA intermediates, that form during DNA replication or upon DNA stress. It prevents their reannealing and in parallel, recruits and activates different proteins and complexes involved in DNA metabolism. Thereby, it plays an essential role both in DNA replication and the cellular response to DNA damage. This chain is Replication protein A 32 kDa subunit-A (rpa2-a), found in Xenopus laevis (African clawed frog).